Reading from the N-terminus, the 264-residue chain is Small ribosomal subunit protein eS1 (264 aa).

The interval 233-264 (GEGGGAGKPSGDEAGAKVERADGYEPPVQESV) is disordered. Residues 242-255 (SGDEAGAKVERADG) show a composition bias toward basic and acidic residues.

It belongs to the eukaryotic ribosomal protein eS1 family. As to quaternary structure, component of the small ribosomal subunit. Mature ribosomes consist of a small (40S) and a large (60S) subunit. The 40S subunit contains about 33 different proteins and 1 molecule of RNA (18S). The 60S subunit contains about 49 different proteins and 3 molecules of RNA (25S, 5.8S and 5S).

Its subcellular location is the cytoplasm. This Eimeria tenella (Coccidian parasite) protein is Small ribosomal subunit protein eS1.